A 214-amino-acid polypeptide reads, in one-letter code: tRNA (guanine-N(7)-)-methyltransferase (214 aa).

S-adenosyl-L-methionine-binding residues include Glu43, Glu68, Asp95, and Asp117. Asp117 is an active-site residue. Substrate-binding positions include Lys121, Asp153, and Thr190–Glu193.

The protein belongs to the class I-like SAM-binding methyltransferase superfamily. TrmB family.

The catalysed reaction is guanosine(46) in tRNA + S-adenosyl-L-methionine = N(7)-methylguanosine(46) in tRNA + S-adenosyl-L-homocysteine. Its pathway is tRNA modification; N(7)-methylguanine-tRNA biosynthesis. Functionally, catalyzes the formation of N(7)-methylguanine at position 46 (m7G46) in tRNA. The protein is tRNA (guanine-N(7)-)-methyltransferase of Staphylococcus aureus (strain Mu3 / ATCC 700698).